We begin with the raw amino-acid sequence, 458 residues long: tRNA modification GTPase MnmE (458 aa).

(6S)-5-formyl-5,6,7,8-tetrahydrofolate-binding residues include Arg-26, Glu-88, and Arg-127. The 155-residue stretch at 224–378 folds into the TrmE-type G domain; sequence GLSTAIIGRP…IEDRINQLFF (155 aa). K(+) is bound at residue Asn-234. GTP is bound by residues 234–239, 253–259, and 278–281; these read NVGKSS, TDIAGTT, and DTAG. Position 238 (Ser-238) interacts with Mg(2+). Thr-253, Ile-255, and Thr-258 together coordinate K(+). Thr-259 contacts Mg(2+). Residue Lys-458 coordinates (6S)-5-formyl-5,6,7,8-tetrahydrofolate.

The protein belongs to the TRAFAC class TrmE-Era-EngA-EngB-Septin-like GTPase superfamily. TrmE GTPase family. As to quaternary structure, homodimer. Heterotetramer of two MnmE and two MnmG subunits. K(+) is required as a cofactor.

Its subcellular location is the cytoplasm. Its function is as follows. Exhibits a very high intrinsic GTPase hydrolysis rate. Involved in the addition of a carboxymethylaminomethyl (cmnm) group at the wobble position (U34) of certain tRNAs, forming tRNA-cmnm(5)s(2)U34. The polypeptide is tRNA modification GTPase MnmE (Streptococcus pyogenes serotype M4 (strain MGAS10750)).